The following is a 348-amino-acid chain: uncharacterized protein (348 aa).

Positions 132–348 (SECRRSSDAL…QGTRRDSARL (217 aa)) are disordered. A compositionally biased stretch (low complexity) spans 161 to 178 (STAPIPNAAISSARSSAR). The segment covering 192-207 (SRSSSETRSPGGTVQP) has biased composition (polar residues). Residues 227–273 (AAGSLLPAPRPPASSASSPQAAAPAAPSATRLPRRTTPSAPRPSSRP) show a composition bias toward low complexity. A compositionally biased stretch (pro residues) spans 274 to 287 (ARPPIPAARPPPRR). A compositionally biased stretch (low complexity) spans 288-310 (TPGTPRPAAARARAPAGCSPARR).

This is an uncharacterized protein from Streptomyces fradiae (Streptomyces roseoflavus).